We begin with the raw amino-acid sequence, 490 residues long: MSTPGVNASASLSPDRLNSPVTIPAVMFIFGVVGNLVAIVVLCKSRKEQKETTFYTLVCGLAVTDLLGTLLVSPVTIATYMKGQWPGGQPLCEYSTFILLFFSLSGLSIICAMSVERYLAINHAYFYSHYVDKRLAGLTLFAVYASNVLFCALPNMGLGSSRLQYPDTWCFIDWTTNVTAHAAYSYMYAGFSSFLILATVLCNVLVCGALLRMHRQFMRRTSLGTEQHHAAAAAVTSVASRGHPAASPALPRLSDFRRRRSFRRIAGAEIQMVILLIATSLVVLICSIPLVVRVFVNQLYQPSLEREVSKNPDLQAIRIASVNPILDPWIYILLRKTVLSKAIEKIKCLFCRIGGSRRERSGQHCSDSQRTSSAMSGHSRSFISRELKEISSTSQTLLPDLSLPDLSENGLGGRNLLPGVPGMGLAQEDTTSLRTLRISETSDSSQGQDSESVLLVDEAGGSGRAGPAPKGSSLQVTFPSETLNLSEKCI.

Residues 1 to 19 (MSTPGVNASASLSPDRLNS) lie on the Extracellular side of the membrane. N7 carries N-linked (GlcNAc...) asparagine glycosylation. Residues 20–43 (PVTIPAVMFIFGVVGNLVAIVVLC) form a helical membrane-spanning segment. Over 44-55 (KSRKEQKETTFY) the chain is Cytoplasmic. A helical transmembrane segment spans residues 56-79 (TLVCGLAVTDLLGTLLVSPVTIAT). Topologically, residues 80–96 (YMKGQWPGGQPLCEYST) are extracellular. A disulfide bridge connects residues C92 and C170. A helical membrane pass occupies residues 97–115 (FILLFFSLSGLSIICAMSV). The Cytoplasmic portion of the chain corresponds to 116 to 135 (ERYLAINHAYFYSHYVDKRL). A helical transmembrane segment spans residues 136-160 (AGLTLFAVYASNVLFCALPNMGLGS). The Extracellular portion of the chain corresponds to 161–184 (SRLQYPDTWCFIDWTTNVTAHAAY). A helical transmembrane segment spans residues 185-211 (SYMYAGFSSFLILATVLCNVLVCGALL). The Cytoplasmic segment spans residues 212–269 (RMHRQFMRRTSLGTEQHHAAAAAVTSVASRGHPAASPALPRLSDFRRRRSFRRIAGAE). The helical transmembrane segment at 270–297 (IQMVILLIATSLVVLICSIPLVVRVFVN) threads the bilayer. At 298 to 314 (QLYQPSLEREVSKNPDL) the chain is on the extracellular side. A helical transmembrane segment spans residues 315–334 (QAIRIASVNPILDPWIYILL). Residues 335 to 490 (RKTVLSKAIE…ETLNLSEKCI (156 aa)) lie on the Cytoplasmic side of the membrane. Residues 359–378 (ERSGQHCSDSQRTSSAMSGH) form a disordered region. The segment covering 363 to 378 (QHCSDSQRTSSAMSGH) has biased composition (polar residues). Phosphoserine is present on residues S376, S379, S381, and S384. The segment covering 439-451 (SETSDSSQGQDSE) has biased composition (polar residues). The interval 439-477 (SETSDSSQGQDSESVLLVDEAGGSGRAGPAPKGSSLQVT) is disordered.

This sequence belongs to the G-protein coupled receptor 1 family. Interacts with FEM1A. In terms of processing, phosphorylation mediates agonist-mediated desensitization by promoting cytoplasmic retention.

It localises to the cell membrane. Its function is as follows. Receptor for prostaglandin E2 (PGE2). The activity of this receptor is mediated by G(s) proteins that stimulate adenylate cyclase. Has a relaxing effect on smooth muscle. May play an important role in regulating renal hemodynamics, intestinal epithelial transport, adrenal aldosterone secretion, and uterine function. The polypeptide is Prostaglandin E2 receptor EP4 subtype (PTGER4) (Pan troglodytes (Chimpanzee)).